The chain runs to 272 residues: Bis(5'-nucleosyl)-tetraphosphatase, symmetrical (272 aa).

The protein belongs to the Ap4A hydrolase family.

It catalyses the reaction P(1),P(4)-bis(5'-adenosyl) tetraphosphate + H2O = 2 ADP + 2 H(+). In terms of biological role, hydrolyzes diadenosine 5',5'''-P1,P4-tetraphosphate to yield ADP. This chain is Bis(5'-nucleosyl)-tetraphosphatase, symmetrical, found in Shewanella frigidimarina (strain NCIMB 400).